Reading from the N-terminus, the 86-residue chain is ADIENGERIFTANCAACHAGGNNVIMPEKTLKKDALEANGMNAVSAITYQVTNGKNAMPAFGGRLSDSDIEDVANYVLSQSEQGWD.

Heme c-binding residues include cysteine 14, cysteine 17, histidine 18, and methionine 58.

It belongs to the cytochrome c family. PetJ subfamily. Monomer. In terms of processing, binds 1 heme c group covalently per subunit.

It is found in the plastid. The protein localises to the chloroplast thylakoid lumen. In terms of biological role, functions as an electron carrier between membrane-bound cytochrome b6-f and photosystem I in oxygenic photosynthesis. The chain is Cytochrome c6 (petJ) from Bumilleriopsis filiformis (Yellow-green alga).